Here is a 279-residue protein sequence, read N- to C-terminus: NADPH-dependent 7-cyano-7-deazaguanine reductase (279 aa).

86 to 88 lines the substrate pocket; it reads IES. 88 to 89 serves as a coordination point for NADPH; sequence SK. Cysteine 187 functions as the Thioimide intermediate in the catalytic mechanism. Aspartate 194 functions as the Proton donor in the catalytic mechanism. Position 226–227 (226–227) interacts with substrate; it reads HE. NADPH is bound at residue 255-256; sequence RG.

The protein belongs to the GTP cyclohydrolase I family. QueF type 2 subfamily. In terms of assembly, homodimer.

It localises to the cytoplasm. The enzyme catalyses 7-aminomethyl-7-carbaguanine + 2 NADP(+) = 7-cyano-7-deazaguanine + 2 NADPH + 3 H(+). It functions in the pathway tRNA modification; tRNA-queuosine biosynthesis. Functionally, catalyzes the NADPH-dependent reduction of 7-cyano-7-deazaguanine (preQ0) to 7-aminomethyl-7-deazaguanine (preQ1). This Haemophilus influenzae (strain PittGG) protein is NADPH-dependent 7-cyano-7-deazaguanine reductase.